The following is an 89-amino-acid chain: Small ribosomal subunit protein uS17 (89 aa).

The protein belongs to the universal ribosomal protein uS17 family. As to quaternary structure, part of the 30S ribosomal subunit.

Its function is as follows. One of the primary rRNA binding proteins, it binds specifically to the 5'-end of 16S ribosomal RNA. The protein is Small ribosomal subunit protein uS17 of Stenotrophomonas maltophilia (strain K279a).